A 1062-amino-acid chain; its full sequence is Inversin (1062 aa).

ANK repeat units lie at residues 13-42 (SLASQVHAAAVNGDKGALQRLIVGNSALRD), 47-76 (FGRTPLMYCVLADRVDCADALLKAGADVNK), 80-110 (SRRTALHLAAQKGNYRFMKLLLTRRANWMQK), 113-144 (EEMTPLHLSTRHRSPKCLALLLKFMAPGEVDT), 148-177 (NKQTALHWSAYYNNPEHAKLLIKHDSNIGI), 181-213 (EGKIPLHWAANHKDPSAVHTVRCILDAAPTESL), 220-250 (EGRTPLHFAVADGNLTVVDVLTSYESCNITS), 254-283 (LFRTPLHWAALLGHAQIVHLLLERNKSGTI), 288-317 (QGATPLHYAAQSNFAETVKVFLQHPSVKDD), 321-350 (EGRTSFMWAAGKGNDDVLRTMLSLKSDIDI), 356-385 (YGGTALHAAALSGHVSTVKLLLDNDAQVDA), 389-418 (MKHTPLFRACEMGHRDVIQTLIKGGARVDL), 422-451 (DGHSLLHWAALGGNADVCQILIENKINPNV), 455-484 (AGRTPLQCAAYGGYINCMAVLMENNADPNI), 488-517 (EGRTALHWSCNNGYLDAIKLLLDFAAFPNQ), and 523-553 (ERYTPLDYALLGERHEVIQFMLEHGALSIAA). Position 75 is a 3-hydroxyasparagine (Asn75). Residues 490 to 498 (RTALHWSCN) carry the D-box 1 motif. The 30-residue stretch at 555–584 (QDIAAFKIQAVYKGYKVRKAFRDRKNLLMK) folds into the IQ 1 domain. Basic and acidic residues predominate over residues 589 to 608 (RKDAAAKKREEENKRKEAEQ). The tract at residues 589 to 849 (RKDAAAKKRE…QDKLIGGVSS (261 aa)) is disordered. Polar residues-rich tracts occupy residues 636 to 658 (QNEGSKQDATPSKQPPASHTVQS) and 676 to 689 (QGDSSIDLQGTASR). The span at 690-700 (KPSETPIEHCR) shows a compositional bias: basic and acidic residues. The segment covering 713-724 (GGNSSKNQGTSS) has biased composition (polar residues). 2 stretches are compositionally biased toward basic and acidic residues: residues 725-741 (VEKRRGETNGKHRRCEE) and 775-788 (DHPRKPNKRQDRAA). The D-box 2 signature appears at 907–915 (RKELFRRKN). The IQ 2 domain maps to 914–943 (KNKAAAVIQRAWRSYQLRKHLSRLLHLKQL). The disordered stretch occupies residues 1042 to 1062 (RSKKFSYNLQPSSQSKNKPKL). Polar residues predominate over residues 1046 to 1062 (FSYNLQPSSQSKNKPKL).

In terms of assembly, interacts with microtubules. Interacts with NPHP1. Interacts with DVL1, PRICKLE (PRICKLE1 or PRICKLE2) and Strabismus (VANGL1 or VANGL2). Binds calmodulin via its IQ domains. Interacts with APC2. Interacts with alpha-, beta-, and gamma-catenin. Interacts with N-cadherin (CDH2). Interacts with NPHP3. Interacts with IQCB1; the interaction likely requires additional interactors. Component of a complex containing at least ANKS6, INVS, NEK8 and NPHP3. ANKS6 may organize complex assembly by linking INVS and NPHP3 to NEK8 and INVS may target the complex to the proximal ciliary axoneme. In terms of processing, may be ubiquitinated via its interaction with APC2. Post-translationally, hydroxylated at Asn-75, most probably by HIF1AN. In terms of tissue distribution, strongly expressed in the primary cilia of renal cells, especially in the varicosities, swellings observed in the cilia. Localizes in the node monocilia and in other 9+0 monocilia, including those of kidney epithelial cells and the pituitary gland, but it does not localize to 9+2 cilia (at protein level). In adult, it is expressed at high level in liver and kidney. Weakly or not expressed in other tissues.

The protein localises to the cytoplasm. The protein resides in the cytoskeleton. It localises to the membrane. It is found in the nucleus. Its subcellular location is the perinuclear region. The protein localises to the spindle. Required for normal renal development and establishment of left-right axis. Probably acts as a molecular switch between different Wnt signaling pathways. Inhibits the canonical Wnt pathway by targeting cytoplasmic disheveled (DVL1) for degradation by the ubiquitin-proteasome. This suggests that it is required in renal development to oppose the repression of terminal differentiation of tubular epithelial cells by Wnt signaling. Involved in the organization of apical junctions in kidney cells together with NPHP1, NPHP4 and RPGRIP1L/NPHP8. Does not seem to be strictly required for ciliogenesis. This is Inversin (Invs) from Mus musculus (Mouse).